The chain runs to 214 residues: MSQRKARGPPAMPGVGHSQTQAKARLLPGADRKRSRLSRTRQDPWEERSWSNQRWSRATPGPRGTRAGGLALGRSEASPENAARERSRVRTLRQAFLALQAALPAVPPDTKLSKLDVLVLAASYIAHLTRTLGHELPGPAWPPFLRGLRYLHPLKKWPMRSRLYAGGLGYSDLDSTTASTPSQRTRDAEVGSQVPGEADALLSTTPLSPALGDK.

Disordered stretches follow at residues 1–86 (MSQR…ARER) and 174–214 (DSTT…LGDK). The span at 40–49 (TRQDPWEERS) shows a compositional bias: basic and acidic residues. In terms of domain architecture, bHLH spans 76 to 128 (EASPENAARERSRVRTLRQAFLALQAALPAVPPDTKLSKLDVLVLAASYIAHL). Positions 174 to 183 (DSTTASTPSQ) are enriched in polar residues.

In terms of assembly, forms inactive heterodimeric complexes with TCF3. Expressed in liver, kidney and spleen.

The protein resides in the nucleus. Its function is as follows. Inhibits E-box-mediated binding and transactivation of bHLH factors. Inhibitory effect is similar to that of ID proteins. Inhibits the formation of TCF3 and MYOD1 homodimers and heterodimers. Lacks DNA binding activity. Seems to play a role in the inhibition of myogenesis. This Homo sapiens (Human) protein is Transcription factor 23 (TCF23).